The primary structure comprises 533 residues: Probable dolichyl pyrophosphate Man9GlcNAc2 alpha-1,3-glucosyltransferase (533 aa).

The segment at 1 to 20 (MPKKKPAKHSGEDDITIPVS) is disordered. A run of 9 helical transmembrane segments spans residues 42–64 (FLCI…YSGA), 149–169 (WTVL…FVLV), 184–204 (WHIA…GHFQ), 214–234 (VGAI…LFSL), 264–284 (ILSV…FWWP), 360–380 (GFLY…FQVH), 422–442 (LLIP…SPGN), 463–483 (VFLL…YLTI), and 491–511 (FLFE…FAFY).

The protein belongs to the ALG6/ALG8 glucosyltransferase family.

The protein resides in the endoplasmic reticulum membrane. It catalyses the reaction an alpha-D-Man-(1-&gt;2)-alpha-D-Man-(1-&gt;2)-alpha-D-Man-(1-&gt;3)-[alpha-D-Man-(1-&gt;2)-alpha-D-Man-(1-&gt;3)-[alpha-D-Man-(1-&gt;2)-alpha-D-Man-(1-&gt;6)]-alpha-D-Man-(1-&gt;6)]-beta-D-Man-(1-&gt;4)-beta-D-GlcNAc-(1-&gt;4)-alpha-D-GlcNAc-diphospho-di-trans,poly-cis-dolichol + a di-trans,poly-cis-dolichyl beta-D-glucosyl phosphate = an alpha-D-Glc-(1-&gt;3)-alpha-D-Man-(1-&gt;2)-alpha-D-Man-(1-&gt;2)-alpha-D-Man-(1-&gt;3)-[alpha-D-Man-(1-&gt;2)-alpha-D-Man-(1-&gt;3)-[alpha-D-Man-(1-&gt;2)-alpha-D-Man-(1-&gt;6)]-alpha-D-Man-(1-&gt;6)]-beta-D-Man-(1-&gt;4)-beta-D-GlcNAc-(1-&gt;4)-alpha-D-GlcNAc-diphospho-di-trans,poly-cis-dolichol + a di-trans,poly-cis-dolichyl phosphate + H(+). Its pathway is protein modification; protein glycosylation. In terms of biological role, adds the first glucose residue to the lipid-linked oligosaccharide precursor for N-linked glycosylation. Transfers glucose from dolichyl phosphate glucose (Dol-P-Glc) onto the lipid-linked oligosaccharide Man(9)GlcNAc(2)-PP-Dol. The sequence is that of Probable dolichyl pyrophosphate Man9GlcNAc2 alpha-1,3-glucosyltransferase from Arabidopsis thaliana (Mouse-ear cress).